A 149-amino-acid polypeptide reads, in one-letter code: Thioredoxin-like protein 4B (149 aa).

It belongs to the DIM1 family. In terms of assembly, homodimer. Interacts with the U5-102 kDa protein subunit of the spliceosome.

The protein resides in the nucleus. Essential role in pre-mRNA splicing. Required in cell cycle progression for S/G(2) transition. In Homo sapiens (Human), this protein is Thioredoxin-like protein 4B (TXNL4B).